Consider the following 205-residue polypeptide: uncharacterized protein (205 aa).

It to M.jannaschii MJ0638 and MJ1252 and M.tuberculosis Rv2003c.

This is an uncharacterized protein from Methanocaldococcus jannaschii (strain ATCC 43067 / DSM 2661 / JAL-1 / JCM 10045 / NBRC 100440) (Methanococcus jannaschii).